Consider the following 550-residue polypeptide: Hydroxylamine reductase (550 aa).

Positions 3, 6, 18, and 25 each coordinate [2Fe-2S] cluster. The hybrid [4Fe-2O-2S] cluster site is built by H249, E273, C317, C405, C433, C458, E492, and K494. At C405 the chain carries Cysteine persulfide.

It belongs to the HCP family. It depends on [2Fe-2S] cluster as a cofactor. Hybrid [4Fe-2O-2S] cluster serves as cofactor.

Its subcellular location is the cytoplasm. It carries out the reaction A + NH4(+) + H2O = hydroxylamine + AH2 + H(+). Its function is as follows. Catalyzes the reduction of hydroxylamine to form NH(3) and H(2)O. The chain is Hydroxylamine reductase from Pectobacterium carotovorum subsp. carotovorum (strain PC1).